Consider the following 495-residue polypeptide: MRILQVSAELFPLLKTGGLADVAGALPLALMAAGQDARVLLPGFPAILAGVRELAPVAEFTAPWGPERFGLRAGRIAIDGAAAPITAYVIDAPVLYDRPGNPYEDATRQPYGDNHRRFALLGWAAAQLAQGLDPAWQPEVVHAHDWHAGLAPAYLHFAREAGLTRTGSVFTVHNLAYQGISAPWNFADLGLPAPAFHMNGLEYHGQVSFMKGGLYFADRLTTVSPTYAREIQTPEQGFGLDGLLRLRGGVLTGILNAVDDEVWNPATDSALVQGYHTPDGRHMAGKARCKAVLQHQLGLAERPDAPLFILVSRLTEQKGLHLVLGGLDTLLAEGGQLALLGSGEAGLEQAFRERAAAAPRAVSVTIGYNETLAHQLFGGGDVTLVPSLFEPCGLTQMYGLKYGSLPLVRRVGGLADTVVDCTLEDMASGHATGFVFDRFDAADYDRALRRAFALYQRAPDWRRVRGNAMRRPADWASAAGQYIEVYRQALESAGT.

Position 15 (Lys15) interacts with ADP-alpha-D-glucose.

Belongs to the glycosyltransferase 1 family. Bacterial/plant glycogen synthase subfamily.

It catalyses the reaction [(1-&gt;4)-alpha-D-glucosyl](n) + ADP-alpha-D-glucose = [(1-&gt;4)-alpha-D-glucosyl](n+1) + ADP + H(+). It participates in glycan biosynthesis; glycogen biosynthesis. Synthesizes alpha-1,4-glucan chains using ADP-glucose. The sequence is that of Glycogen synthase from Variovorax paradoxus (strain S110).